Reading from the N-terminus, the 504-residue chain is Zinc finger CCCH domain-containing protein 18 (504 aa).

Positions 40-69 (SNADLLEVHEELLAAIKDAEEGLLHLKRSR) form a coiled coil. The disordered stretch occupies residues 77–105 (IFPNQEPTSEAPEVAVDPPDDVEPEPLEP). Residues 94–104 (PPDDVEPEPLE) are compositionally biased toward acidic residues. The C3H1-type zinc-finger motif lies at 146 to 173 (SENMSMCKFFLQQRCRFGSNCRLSHGIV). The interval 230-276 (GSSARLPSDSLSISEYADESDEDGEGSSSDEGSDFSEDGDQEDESVH) is disordered. Composition is skewed to acidic residues over residues 245-254 (YADESDEDGE) and 260-272 (EGSD…DQED). One can recognise a G-patch domain in the interval 304 to 350 (TRGVASKMMAKMGYREGMGLGVSGQGMLDPIPVKVLPPKQSLDHAVA). Disordered regions lie at residues 351-390 (ASEV…EEER), 406-432 (AEGS…DRRS), and 482-504 (EATH…WLKF). Basic residues predominate over residues 361-374 (GKKRSRGGKRKREK). Basic and acidic residues-rich tracts occupy residues 375–390 (KFAE…EEER), 413–432 (SKKD…DRRS), and 493–504 (ARKEKEKKWLKF). The stretch at 430–500 (RRSLLAYDDE…AVARKEKEKK (71 aa)) forms a coiled coil.

In Oryza sativa subsp. japonica (Rice), this protein is Zinc finger CCCH domain-containing protein 18.